The chain runs to 450 residues: Neutral protease 2 homolog AFUB_070680 (450 aa).

The signal sequence occupies residues methionine 1–alanine 19. A propeptide spanning residues leucine 20–arginine 172 is cleaved from the precursor. Intrachain disulfides connect cysteine 179–cysteine 251 and cysteine 258–cysteine 276. Residue histidine 300 coordinates Zn(2+). Glutamate 301 is a catalytic residue. Residues histidine 304 and aspartate 315 each coordinate Zn(2+). A compositionally biased stretch (polar residues) spans glutamine 364–methionine 392. A disordered region spans residues glutamine 364–proline 416. Over residues glutamine 398–threonine 409 the composition is skewed to low complexity.

The protein belongs to the peptidase M35 family. Zn(2+) is required as a cofactor.

It is found in the secreted. The enzyme catalyses Preferential cleavage of bonds with hydrophobic residues in P1'. Also 3-Asn-|-Gln-4 and 8-Gly-|-Ser-9 bonds in insulin B chain.. In terms of biological role, secreted metalloproteinase that allows assimilation of proteinaceous substrates. Shows high activities on basic nuclear substrates such as histone and protamine. May be involved in virulence. The polypeptide is Neutral protease 2 homolog AFUB_070680 (Aspergillus fumigatus (strain ATCC MYA-4609 / CBS 101355 / FGSC A1100 / Af293) (Neosartorya fumigata)).